The sequence spans 347 residues: tRNA N6-adenosine threonylcarbamoyltransferase (347 aa).

Fe cation-binding residues include histidine 115 and histidine 119. Residues 138–142, aspartate 171, glycine 184, and asparagine 277 contribute to the substrate site; that span reads LVSGG. Residue aspartate 305 coordinates Fe cation.

It belongs to the KAE1 / TsaD family. Requires Fe(2+) as cofactor.

The protein resides in the cytoplasm. It catalyses the reaction L-threonylcarbamoyladenylate + adenosine(37) in tRNA = N(6)-L-threonylcarbamoyladenosine(37) in tRNA + AMP + H(+). In terms of biological role, required for the formation of a threonylcarbamoyl group on adenosine at position 37 (t(6)A37) in tRNAs that read codons beginning with adenine. Is involved in the transfer of the threonylcarbamoyl moiety of threonylcarbamoyl-AMP (TC-AMP) to the N6 group of A37, together with TsaE and TsaB. TsaD likely plays a direct catalytic role in this reaction. In Polaromonas sp. (strain JS666 / ATCC BAA-500), this protein is tRNA N6-adenosine threonylcarbamoyltransferase.